The following is a 285-amino-acid chain: 4-hydroxybenzoate octaprenyltransferase (285 aa).

8 helical membrane passes run 28–48 (LWAM…WIFV), 86–106 (IAAW…FALV), 110–130 (NALT…YPFF), 133–153 (FFAI…PMAF), 165–185 (WLML…YAMV), 210–230 (IMLC…LLGL), 232–252 (WPYW…YTLI), and 262–284 (AAFR…AYAI).

It belongs to the UbiA prenyltransferase family. Requires Mg(2+) as cofactor.

The protein localises to the cell inner membrane. The catalysed reaction is all-trans-octaprenyl diphosphate + 4-hydroxybenzoate = 4-hydroxy-3-(all-trans-octaprenyl)benzoate + diphosphate. It participates in cofactor biosynthesis; ubiquinone biosynthesis. Catalyzes the prenylation of para-hydroxybenzoate (PHB) with an all-trans polyprenyl group. Mediates the second step in the final reaction sequence of ubiquinone-8 (UQ-8) biosynthesis, which is the condensation of the polyisoprenoid side chain with PHB, generating the first membrane-bound Q intermediate 3-octaprenyl-4-hydroxybenzoate. In Cupriavidus necator (strain ATCC 17699 / DSM 428 / KCTC 22496 / NCIMB 10442 / H16 / Stanier 337) (Ralstonia eutropha), this protein is 4-hydroxybenzoate octaprenyltransferase.